The primary structure comprises 99 residues: Plastocyanin (99 aa).

The region spanning 1 to 99 (IEIKLGGDDG…AGMVGKVTVQ (99 aa)) is the Plastocyanin-like domain. H37, C84, H87, and M92 together coordinate Cu cation.

Belongs to the plastocyanin family. Cu(2+) serves as cofactor.

Its subcellular location is the plastid. The protein resides in the chloroplast thylakoid membrane. In terms of biological role, participates in electron transfer between P700 and the cytochrome b6-f complex in photosystem I. This Rumex obtusifolius (Bitter dock) protein is Plastocyanin (PETE).